A 453-amino-acid polypeptide reads, in one-letter code: Cysteine--tRNA ligase (453 aa).

Cys31 is a binding site for Zn(2+). Positions 33-43 match the 'HIGH' region motif; that stretch reads PTVYDNPHIGN. Cys213, His238, and Glu242 together coordinate Zn(2+). The 'KMSKS' region motif lies at 271 to 275; it reads KMAKS. Lys274 contributes to the ATP binding site.

Belongs to the class-I aminoacyl-tRNA synthetase family. In terms of assembly, monomer. It depends on Zn(2+) as a cofactor.

The protein localises to the cytoplasm. It catalyses the reaction tRNA(Cys) + L-cysteine + ATP = L-cysteinyl-tRNA(Cys) + AMP + diphosphate. In Pelagibacter ubique (strain HTCC1062), this protein is Cysteine--tRNA ligase.